A 597-amino-acid polypeptide reads, in one-letter code: Blastula protease 10 (597 aa).

Residues 1–16 (MKLILFLSGLVSLVLC) form the signal peptide. A propeptide spans 17–93 (TLAAPTGDQK…DEMTGRKKRK (77 aa)) (activation peptide). The interval 24–67 (DQKEIHTETPPPKKPSETTTPGALKTPQPEPKDEEPTPGAFQGD) is disordered. The 202-residue stretch at 93–294 (KATIYESQRW…ELANLIYECD (202 aa)) folds into the Peptidase M12A domain. Disulfide bonds link cysteine 134–cysteine 293, cysteine 162–cysteine 182, cysteine 299–cysteine 315, cysteine 305–cysteine 317, cysteine 319–cysteine 328, cysteine 339–cysteine 365, cysteine 392–cysteine 412, cysteine 484–cysteine 510, and cysteine 537–cysteine 557. Histidine 190 provides a ligand contact to Zn(2+). Glutamate 191 is a catalytic residue. Positions 194 and 200 each coordinate Zn(2+). Positions 295 to 329 (DIEDCAGANECLNGGYHDTECNCVCPSGYNGDLCE) constitute an EGF-like domain. CUB domains are found at residues 339 to 449 (CSER…YRIV) and 484 to 595 (CGGS…YRAI).

Zn(2+) is required as a cofactor.

The protein localises to the cytoplasm. Its subcellular location is the perinuclear region. The protein resides in the cell cortex. It localises to the secreted. It is found in the extracellular space. Could be involved in the differentiation of ectodermal lineages and subsequent patterning of the embryo. This chain is Blastula protease 10 (BP10), found in Paracentrotus lividus (Common sea urchin).